Here is a 150-residue protein sequence, read N- to C-terminus: SsrA-binding protein (150 aa).

The protein belongs to the SmpB family.

The protein resides in the cytoplasm. Functionally, required for rescue of stalled ribosomes mediated by trans-translation. Binds to transfer-messenger RNA (tmRNA), required for stable association of tmRNA with ribosomes. tmRNA and SmpB together mimic tRNA shape, replacing the anticodon stem-loop with SmpB. tmRNA is encoded by the ssrA gene; the 2 termini fold to resemble tRNA(Ala) and it encodes a 'tag peptide', a short internal open reading frame. During trans-translation Ala-aminoacylated tmRNA acts like a tRNA, entering the A-site of stalled ribosomes, displacing the stalled mRNA. The ribosome then switches to translate the ORF on the tmRNA; the nascent peptide is terminated with the 'tag peptide' encoded by the tmRNA and targeted for degradation. The ribosome is freed to recommence translation, which seems to be the essential function of trans-translation. The polypeptide is SsrA-binding protein (Bacteroides thetaiotaomicron (strain ATCC 29148 / DSM 2079 / JCM 5827 / CCUG 10774 / NCTC 10582 / VPI-5482 / E50)).